The sequence spans 274 residues: MSAANADFELFRVFLEKTCGIVLGSNKQYLVSSRLNKLMEQQGIKSLGELVQRIQTQRGGLREMVVDAMTTNETLWFRDTYPFEVLKQRVLPELIKANGGQRLRIWSAACSSGQEPYSLSMAIDEFEKTNLGQLKAGVQIVATDLSGSMLTAAKAGEYDTLAMGRGLSPERLQRYFDAKGPGRWAVKPAIRSRVEFRALNLLDSYASLGKFDMVFCRNVLIYFSAEVKRDILLRIHGTLKPGGYLFLGASEALNNLPDHYQMVQCSPGIIYRAK.

Residues 1–274 form the CheR-type methyltransferase domain; sequence MSAANADFEL…CSPGIIYRAK (274 aa). Residues asparagine 72, threonine 74, arginine 78, glutamate 115, aspartate 144, 200–201, and 217–218 each bind S-adenosyl-L-methionine; these read NL and RN.

The catalysed reaction is L-glutamyl-[protein] + S-adenosyl-L-methionine = [protein]-L-glutamate 5-O-methyl ester + S-adenosyl-L-homocysteine. Methylation of the membrane-bound methyl-accepting chemotaxis proteins (MCP) to form gamma-glutamyl methyl ester residues in MCP. In Pseudomonas aeruginosa (strain ATCC 15692 / DSM 22644 / CIP 104116 / JCM 14847 / LMG 12228 / 1C / PRS 101 / PAO1), this protein is Chemotaxis protein methyltransferase 1 (cheR1).